The primary structure comprises 306 residues: Porphobilinogen deaminase (306 aa).

The residue at position 239 (Cys239) is an S-(dipyrrolylmethanemethyl)cysteine.

The protein belongs to the HMBS family. As to quaternary structure, monomer. It depends on dipyrromethane as a cofactor.

The enzyme catalyses 4 porphobilinogen + H2O = hydroxymethylbilane + 4 NH4(+). The protein operates within porphyrin-containing compound metabolism; protoporphyrin-IX biosynthesis; coproporphyrinogen-III from 5-aminolevulinate: step 2/4. In terms of biological role, tetrapolymerization of the monopyrrole PBG into the hydroxymethylbilane pre-uroporphyrinogen in several discrete steps. The sequence is that of Porphobilinogen deaminase from Helicobacter pylori (strain HPAG1).